The following is an 84-amino-acid chain: Large ribosomal subunit protein bL31B (84 aa).

Belongs to the bacterial ribosomal protein bL31 family. Type B subfamily. Part of the 50S ribosomal subunit.

This Staphylococcus aureus (strain Mu3 / ATCC 700698) protein is Large ribosomal subunit protein bL31B.